Reading from the N-terminus, the 158-residue chain is NAD(P)H-quinone oxidoreductase subunit J, chloroplastic (158 aa).

This sequence belongs to the complex I 30 kDa subunit family. In terms of assembly, NDH is composed of at least 16 different subunits, 5 of which are encoded in the nucleus.

It localises to the plastid. The protein resides in the chloroplast thylakoid membrane. The enzyme catalyses a plastoquinone + NADH + (n+1) H(+)(in) = a plastoquinol + NAD(+) + n H(+)(out). The catalysed reaction is a plastoquinone + NADPH + (n+1) H(+)(in) = a plastoquinol + NADP(+) + n H(+)(out). Functionally, NDH shuttles electrons from NAD(P)H:plastoquinone, via FMN and iron-sulfur (Fe-S) centers, to quinones in the photosynthetic chain and possibly in a chloroplast respiratory chain. The immediate electron acceptor for the enzyme in this species is believed to be plastoquinone. Couples the redox reaction to proton translocation, and thus conserves the redox energy in a proton gradient. The protein is NAD(P)H-quinone oxidoreductase subunit J, chloroplastic of Angiopteris evecta (Mule's foot fern).